A 599-amino-acid chain; its full sequence is Tryptophan 2-C-methyltransferase (599 aa).

A B12-binding domain is found at 4 to 149 (KGTVALINPN…RALAEGRSAD (146 aa)). Positions 167–197 (RVAPPALDPRAAPAPSSSPSPSPAPSSSSAP) are disordered. Over residues 168-181 (VAPPALDPRAAPAP) the composition is skewed to low complexity. The Radical SAM core domain maps to 239 to 492 (YREGGLGSIL…IEYERQFMFD (254 aa)). Residues cysteine 253, cysteine 257, and cysteine 260 each coordinate [4Fe-4S] cluster.

The cofactor is [4Fe-4S] cluster. Requires cob(II)alamin as cofactor.

It carries out the reaction L-tryptophan + S-adenosyl-L-methionine = 2-methyl-L-tryptophan + S-adenosyl-L-homocysteine + H(+). Its function is as follows. Involved in the biosynthetic pathway of the antibiotic thiostrepton A. First, TsrM catalyzes the transfer of a methyl group from S-adenosyl methionine (SAM) to cobalamin, leading to the formation of methylcobalamin (CH3-cobalamin) and S-adenosyl-L-homocysteine (SAH). Then the methyl group is transferred to the C2 position of tryptophan (Trp) with the concerted action of the radical SAM [4Fe-4S] center, leading to the production of methyltryptophan. In Streptomyces laurentii, this protein is Tryptophan 2-C-methyltransferase.